Reading from the N-terminus, the 426-residue chain is Melibiose/raffinose/stachyose-binding protein MelE (426 aa).

A signal peptide spans 1-18 (MKHTFVLFLSLILLVLPG). Cys19 carries N-palmitoyl cysteine lipidation. Cys19 carries S-diacylglycerol cysteine lipidation.

It belongs to the bacterial solute-binding protein 1 family. In terms of assembly, the complex is composed of two ATP-binding proteins (MsmX), two transmembrane proteins (MelC and MelD) and a solute-binding protein (MelE).

It localises to the cell membrane. Part of the ABC transporter complex MelEDC-MsmX involved in melibiose, raffinose and stachyose import. Binds melibiose, raffinose and stachyose. This chain is Melibiose/raffinose/stachyose-binding protein MelE, found in Bacillus subtilis (strain 168).